The sequence spans 1131 residues: Tyrosine-protein kinase JAK2 (1131 aa).

The interaction with cytokine/interferon/growth hormone receptors stretch occupies residues 1 to 239 (MGMACLTMTE…RYRFRRFIEQ (239 aa)). An FERM domain is found at 37–380 (PVLQVYLYHS…GYYRLTADAH (344 aa)). Tyr119 is modified (phosphotyrosine; by autocatalysis). Residues Tyr372 and Tyr373 each carry the phosphotyrosine modification. In terms of domain architecture, SH2; atypical spans 401-482 (HGPISMDFAI…NLKDLLNCYQ (82 aa)). Phosphoserine is present on Ser523. A Protein kinase 1 domain is found at 545 to 809 (LIFNESLGQG…AIIRDLNSLF (265 aa)). Phosphotyrosine is present on residues Tyr570 and Tyr813. One can recognise a Protein kinase 2 domain in the interval 849–1126 (LKFLQQLGKG…RDLALRVDQI (278 aa)). Position 855-863 (855-863 (LGKGNFGSV)) interacts with ATP. Residue Tyr868 is modified to Phosphotyrosine; by autocatalysis. An ATP-binding site is contributed by Lys882. Tyr966 and Tyr972 each carry phosphotyrosine; by autocatalysis. Asp976 (proton acceptor) is an active-site residue. Residues Tyr1007 and Tyr1008 each carry the phosphotyrosine; by autocatalysis modification.

Belongs to the protein kinase superfamily. Tyr protein kinase family. JAK subfamily. As to quaternary structure, interacts with IL23R, SKB1 and STAM2. Interacts with EPOR. Interacts with LYN. Interacts with SIRPA. Interacts with SH2B1. Interacts with TEC. Interacts with IFNGR2 (via intracellular domain). Interacts with LEPR (Isoform B). Interacts with HSP90AB1; promotes functional activation in a heat shock-dependent manner. Interacts with STRA6. Interacts with ASB2; the interaction targets JAK2 for Notch-induced proteasomal degradation. The cofactor is Mg(2+). Autophosphorylated, leading to regulate its activity. Leptin promotes phosphorylation on tyrosine residues, including phosphorylation on Tyr-813. Autophosphorylation on Tyr-119 in response to EPO down-regulates its kinase activity. Autophosphorylation on Tyr-868, Tyr-966 and Tyr-972 in response to growth hormone (GH) are required for maximal kinase activity. Also phosphorylated by TEC. Phosphorylated on tyrosine residues in response to interferon gamma signaling. Phosphorylated on tyrosine residues in response to a signaling cascade that is activated by increased cellular retinol. In terms of processing, undergoes Notch-induced ubiquitination and subsequent proteasomal degradation which is mediated by ASB1 or ASB2, the substrate-recognition components of probable ECS E3 ubiquitin-protein ligase complexes.

The protein localises to the endomembrane system. It is found in the cytoplasm. It localises to the nucleus. The enzyme catalyses L-tyrosyl-[protein] + ATP = O-phospho-L-tyrosyl-[protein] + ADP + H(+). With respect to regulation, regulated by autophosphorylation, can both activate or decrease activity. Heme regulates its activity by enhancing the phosphorylation on Tyr-1007 and Tyr-1008. In terms of biological role, non-receptor tyrosine kinase involved in various processes such as cell growth, development, differentiation or histone modifications. Mediates essential signaling events in both innate and adaptive immunity. In the cytoplasm, plays a pivotal role in signal transduction via its association with type I receptors such as growth hormone (GHR), prolactin (PRLR), leptin (LEPR), erythropoietin (EPOR), thrombopoietin (THPO); or type II receptors including IFN-alpha, IFN-beta, IFN-gamma and multiple interleukins. Following ligand-binding to cell surface receptors, phosphorylates specific tyrosine residues on the cytoplasmic tails of the receptor, creating docking sites for STATs proteins. Subsequently, phosphorylates the STATs proteins once they are recruited to the receptor. Phosphorylated STATs then form homodimer or heterodimers and translocate to the nucleus to activate gene transcription. For example, cell stimulation with erythropoietin (EPO) during erythropoiesis leads to JAK2 autophosphorylation, activation, and its association with erythropoietin receptor (EPOR) that becomes phosphorylated in its cytoplasmic domain. Then, STAT5 (STAT5A or STAT5B) is recruited, phosphorylated and activated by JAK2. Once activated, dimerized STAT5 translocates into the nucleus and promotes the transcription of several essential genes involved in the modulation of erythropoiesis. Part of a signaling cascade that is activated by increased cellular retinol and that leads to the activation of STAT5 (STAT5A or STAT5B). In addition, JAK2 mediates angiotensin-2-induced ARHGEF1 phosphorylation. Plays a role in cell cycle by phosphorylating CDKN1B. Cooperates with TEC through reciprocal phosphorylation to mediate cytokine-driven activation of FOS transcription. In the nucleus, plays a key role in chromatin by specifically mediating phosphorylation of 'Tyr-41' of histone H3 (H3Y41ph), a specific tag that promotes exclusion of CBX5 (HP1 alpha) from chromatin. Up-regulates the potassium voltage-gated channel activity of KCNA3. The polypeptide is Tyrosine-protein kinase JAK2 (Sus scrofa (Pig)).